We begin with the raw amino-acid sequence, 322 residues long: tRNA dimethylallyltransferase (322 aa).

ATP is bound at residue 19–26; sequence GPTASGKT. A substrate-binding site is contributed by 21–26; sequence TASGKT. 3 interaction with substrate tRNA regions span residues 44-47, 168-172, and 255-260; these read DSAL, QRIQR, and RCVGYR.

This sequence belongs to the IPP transferase family. Monomer. Mg(2+) serves as cofactor.

The enzyme catalyses adenosine(37) in tRNA + dimethylallyl diphosphate = N(6)-dimethylallyladenosine(37) in tRNA + diphosphate. Functionally, catalyzes the transfer of a dimethylallyl group onto the adenine at position 37 in tRNAs that read codons beginning with uridine, leading to the formation of N6-(dimethylallyl)adenosine (i(6)A). The sequence is that of tRNA dimethylallyltransferase from Cupriavidus taiwanensis (strain DSM 17343 / BCRC 17206 / CCUG 44338 / CIP 107171 / LMG 19424 / R1) (Ralstonia taiwanensis (strain LMG 19424)).